Reading from the N-terminus, the 427-residue chain is MTAIVDIAAREILDSRGNPTIEVDVTLEDGSQGRAAVPSGASTGAHEAVELRDGDKSRFGGKGVLKAVENVDRDIFDALSGLDAEDQVHIDQVMLELDGTPNKGRLGANAILGVSLAVAKAAAEASSLPLYRYVGGVQARVLPVPMMNIINGGAHADNPIDFQEFMILPVGAPNLKEAVRWGAEVFHVLKGALKKAGHNTNVGDEGGFAPNLPSAEASLEFIVKAITDAGFKPGEDIYLGLDCASTEFFKDGKYVYEGEGKTRNLEEQAAYLGKLVESFPIVTIEDGMSEDDWEGWKILTDLIGKKCQLVGDDLFVTNVSRLSQGISKGIANSILVKVNQIGSLTETLAAVDMAQRAGYTAVMSHRSGETEDSTIADLAVATNCGQIKTGSLARSDRLAKYNQLIRIEEELGSQAVYAGRAALKALA.

Gln163 contacts (2R)-2-phosphoglycerate. The active-site Proton donor is the Glu205. The Mg(2+) site is built by Asp242, Glu285, and Asp312. 4 residues coordinate (2R)-2-phosphoglycerate: Lys337, Arg366, Ser367, and Lys388. The Proton acceptor role is filled by Lys337.

This sequence belongs to the enolase family. Requires Mg(2+) as cofactor.

The protein localises to the cytoplasm. Its subcellular location is the secreted. It localises to the cell surface. It carries out the reaction (2R)-2-phosphoglycerate = phosphoenolpyruvate + H2O. Its pathway is carbohydrate degradation; glycolysis; pyruvate from D-glyceraldehyde 3-phosphate: step 4/5. In terms of biological role, catalyzes the reversible conversion of 2-phosphoglycerate (2-PG) into phosphoenolpyruvate (PEP). It is essential for the degradation of carbohydrates via glycolysis. The protein is Enolase of Beijerinckia indica subsp. indica (strain ATCC 9039 / DSM 1715 / NCIMB 8712).